The sequence spans 591 residues: Metalloendopeptidase OPG085 (591 aa).

Residue H41 coordinates Zn(2+). The active site involves E44. H45 and E112 together coordinate Zn(2+).

This sequence belongs to the peptidase M44 family. It depends on Zn(2+) as a cofactor. Undergoes proteolytic processing during the course of infection. May be cleaved into 46 kDa and 22 kDa products (Potential).

The protein localises to the virion. Functionally, probably involved in maturation of some viral proteins by processing them preferentially at Ala-Gly-|-Ser/Thr/Lys motifs. Does not seem to be responsible for the cleavage of major core proteins. This Homo sapiens (Human) protein is Metalloendopeptidase OPG085 (OPG085).